The primary structure comprises 381 residues: Gustatory and pheromone receptor 39a, isoform C (381 aa).

Topologically, residues 1–37 (MDFQPGELCAYYRLCRYLGIFCIDYNPTKKKFRLRRS) are cytoplasmic. A helical transmembrane segment spans residues 38–58 (VLCYIVHFALQAYLVGCISVM). The Extracellular segment spans residues 59–79 (VTYWRRCFKSELTTTGNHFDR). Residues 80–100 (LVMVIALGILVVQNAWLIWLQ) form a helical membrane-spanning segment. The Cytoplasmic portion of the chain corresponds to 101-129 (APHLRIVRQIEFYRRNHLANVRLLLPKRL). Residues 130 to 150 (LWLIIATNVVYMANFIKTCIF) traverse the membrane as a helical segment. Over 151–171 (EWLTDASRLFVITSLGFPLRY) the chain is Extracellular. The helical transmembrane segment at 172–192 (LVTSFTMGTYFCMVHIVRLVL) threads the bilayer. The Cytoplasmic portion of the chain corresponds to 193-239 (DWNQSQINAIIDESADLKMTSPNRLRLRVCLEMHDRLMLLCNDEISL). A helical transmembrane segment spans residues 240-260 (VYGFIAWLSWMFASLDVTGVI). At 261 to 271 (YLTMVIQTKKS) the chain is on the extracellular side. A helical membrane pass occupies residues 272–292 (IVLKLITNVVWLSPTFMTCAA). Residues 293-350 (SFMSNRVTIQANKTAKMLTKVPRTGTGLDRMIEKFLLKNLRQKPILTAYGFFALDKST) are Cytoplasmic-facing. A helical membrane pass occupies residues 351 to 371 (LFKLFTAIFTYMVILVQFKEM). Topologically, residues 372–381 (ENSTKSINKF) are extracellular. A glycan (N-linked (GlcNAc...) asparagine) is linked at Asn-373.

It belongs to the insect chemoreceptor superfamily. Gustatory receptor (GR) family. Gr21a subfamily. Expressed in the adult labellar chemosensory neurons. In larvae, is expressed in neurons of the terminal external chemosensory organ, as well as in the dorsal pharyngeal sense organ.

It is found in the cell membrane. In terms of biological role, gustatory receptor which mediates acceptance or avoidance behavior, depending on its substrates. Plays a role in sustaining courtship behavior in males, possibly through the reception of a stimulating arrestant pheromone. The polypeptide is Gustatory and pheromone receptor 39a, isoform C (Gr39a) (Drosophila melanogaster (Fruit fly)).